The following is a 93-amino-acid chain: Small ribosomal subunit protein uS17 (93 aa).

The protein belongs to the universal ribosomal protein uS17 family. Part of the 30S ribosomal subunit.

In terms of biological role, one of the primary rRNA binding proteins, it binds specifically to the 5'-end of 16S ribosomal RNA. The sequence is that of Small ribosomal subunit protein uS17 from Rhodococcus erythropolis (strain PR4 / NBRC 100887).